Reading from the N-terminus, the 585-residue chain is Arginine--tRNA ligase (585 aa).

The 'HIGH' region motif lies at 131–141; that stretch reads ANPTGPMHVGH.

The protein belongs to the class-I aminoacyl-tRNA synthetase family. As to quaternary structure, monomer.

Its subcellular location is the cytoplasm. It carries out the reaction tRNA(Arg) + L-arginine + ATP = L-arginyl-tRNA(Arg) + AMP + diphosphate. This is Arginine--tRNA ligase from Rhizobium meliloti (strain 1021) (Ensifer meliloti).